Consider the following 223-residue polypeptide: uncharacterized protein (223 aa).

7 helical membrane-spanning segments follow: residues 25–45, 46–66, 78–98, 105–125, 140–160, 161–181, and 199–219; these read TYFL…ATMA, IGIS…ILFF, LVWT…MLNF, GPIV…GLSA, FLFA…FVGS, TVAH…FILF, and ISMY…LGIM.

It belongs to the BI1 family.

It localises to the cell membrane. This is an uncharacterized protein from Vibrio cholerae serotype O1 (strain ATCC 39315 / El Tor Inaba N16961).